We begin with the raw amino-acid sequence, 257 residues long: NAD-capped RNA hydrolase NudC (257 aa).

Residues K25 and R69 each coordinate substrate. 2 residues coordinate Zn(2+): C98 and C101. E111 contacts substrate. Zn(2+) is bound by residues C116 and C119. A substrate-binding site is contributed by Y124. Residues P125 to T248 form the Nudix hydrolase domain. Residues A158, E174, and E178 each contribute to the a divalent metal cation site. A Nudix box motif is present at residues G159–G180. Residue Q192 to S199 coordinates substrate. A divalent metal cation is bound at residue E219. A241 serves as a coordination point for substrate.

This sequence belongs to the Nudix hydrolase family. NudC subfamily. Homodimer. It depends on Mg(2+) as a cofactor. Mn(2+) is required as a cofactor. The cofactor is Zn(2+).

It catalyses the reaction a 5'-end NAD(+)-phospho-ribonucleoside in mRNA + H2O = a 5'-end phospho-adenosine-phospho-ribonucleoside in mRNA + beta-nicotinamide D-ribonucleotide + 2 H(+). The catalysed reaction is NAD(+) + H2O = beta-nicotinamide D-ribonucleotide + AMP + 2 H(+). It carries out the reaction NADH + H2O = reduced beta-nicotinamide D-ribonucleotide + AMP + 2 H(+). In terms of biological role, mRNA decapping enzyme that specifically removes the nicotinamide adenine dinucleotide (NAD) cap from a subset of mRNAs by hydrolyzing the diphosphate linkage to produce nicotinamide mononucleotide (NMN) and 5' monophosphate mRNA. The NAD-cap is present at the 5'-end of some mRNAs and stabilizes RNA against 5'-processing. Has preference for mRNAs with a 5'-end purine. Catalyzes the hydrolysis of a broad range of dinucleotide pyrophosphates. The polypeptide is NAD-capped RNA hydrolase NudC (Escherichia coli O127:H6 (strain E2348/69 / EPEC)).